Here is a 32-residue protein sequence, read N- to C-terminus: Delta-conotoxin-like MVID (32 aa).

Intrachain disulfides connect Cys3-Cys18, Cys10-Cys22, and Cys17-Cys27. Residue Pro14 is modified to 4-hydroxyproline.

The protein belongs to the conotoxin O1 superfamily. As to expression, expressed by the venom duct.

It localises to the secreted. Functionally, delta-conotoxins bind to site 6 of voltage-gated sodium channels (Nav) and inhibit the inactivation process. This chain is Delta-conotoxin-like MVID, found in Conus magus (Magical cone).